The primary structure comprises 468 residues: Protein phosphatase ppm-1.A (468 aa).

Positions Met-1 to Asn-23 are disordered. One can recognise a PPM-type phosphatase domain in the interval Arg-106–Phe-381. Residues Asp-145, Gly-146, Asp-329, and Asp-372 each contribute to the Mn(2+) site.

It belongs to the PP2C family. Mg(2+) serves as cofactor. Mn(2+) is required as a cofactor. As to expression, expressed in neurons of the nerve ring and motor neurons of the ventral nerve cord.

The protein resides in the synapse. The catalysed reaction is O-phospho-L-seryl-[protein] + H2O = L-seryl-[protein] + phosphate. The enzyme catalyses O-phospho-L-threonyl-[protein] + H2O = L-threonyl-[protein] + phosphate. Functionally, probable phosphatase which regulates axon termination in ALM and PLM neurons, and synaptic branch extension and/or stabilization in PLM neurons. Plays a role in synapse formation in GABAergic DD motor neurons probably by dephosphorylating pmk-3 thereby negatively regulating a MAP kinase pathway that includes dlk-1, mkk-4 and pmk-3. This chain is Protein phosphatase ppm-1.A, found in Caenorhabditis elegans.